The following is a 304-amino-acid chain: Large ribosomal subunit protein uL18y (304 aa).

Belongs to the universal ribosomal protein uL18 family. As to quaternary structure, component of the large ribosomal subunit (LSU).

The protein resides in the cytoplasm. The protein localises to the nucleus. Functionally, component of the ribosome, a large ribonucleoprotein complex responsible for the synthesis of proteins in the cell. The small ribosomal subunit (SSU) binds messenger RNAs (mRNAs) and translates the encoded message by selecting cognate aminoacyl-transfer RNA (tRNA) molecules. The large subunit (LSU) contains the ribosomal catalytic site termed the peptidyl transferase center (PTC), which catalyzes the formation of peptide bonds, thereby polymerizing the amino acids delivered by tRNAs into a polypeptide chain. The nascent polypeptides leave the ribosome through a tunnel in the LSU and interact with protein factors that function in enzymatic processing, targeting, and the membrane insertion of nascent chains at the exit of the ribosomal tunnel. The sequence is that of Large ribosomal subunit protein uL18y (RPL5B) from Oryza sativa subsp. japonica (Rice).